Reading from the N-terminus, the 148-residue chain is Large ribosomal subunit protein bL9 (148 aa).

The protein belongs to the bacterial ribosomal protein bL9 family.

In terms of biological role, binds to the 23S rRNA. This is Large ribosomal subunit protein bL9 from Hydrogenobaculum sp. (strain Y04AAS1).